The sequence spans 53 residues: Ribulose bisphosphate carboxylase large chain (53 aa).

Residues M1–S2 constitute a propeptide that is removed on maturation. P3 carries the N-acetylproline modification. At K14 the chain carries N6,N6,N6-trimethyllysine.

The protein belongs to the RuBisCO large chain family. Type I subfamily. As to quaternary structure, heterohexadecamer of 8 large chains and 8 small chains.

The protein localises to the plastid. It localises to the chloroplast. It catalyses the reaction 2 (2R)-3-phosphoglycerate + 2 H(+) = D-ribulose 1,5-bisphosphate + CO2 + H2O. The enzyme catalyses D-ribulose 1,5-bisphosphate + O2 = 2-phosphoglycolate + (2R)-3-phosphoglycerate + 2 H(+). In terms of biological role, ruBisCO catalyzes two reactions: the carboxylation of D-ribulose 1,5-bisphosphate, the primary event in carbon dioxide fixation, as well as the oxidative fragmentation of the pentose substrate in the photorespiration process. Both reactions occur simultaneously and in competition at the same active site. This Malus domestica (Apple) protein is Ribulose bisphosphate carboxylase large chain (rbcL).